We begin with the raw amino-acid sequence, 317 residues long: Carbonic anhydrase 5B, mitochondrial (317 aa).

A mitochondrion-targeting transit peptide spans 1-33 (MVVMNSLRVILQASPGKLLWRKFQIPRFMPARP). An Alpha-carbonic anhydrase domain is found at 37–296 (YTCTYKTRNR…LMNRTVRSSF (260 aa)). 3 residues coordinate Zn(2+): histidine 130, histidine 132, and histidine 155. Residue 235–236 (TT) coordinates substrate.

It belongs to the alpha-carbonic anhydrase family. Requires Zn(2+) as cofactor. Strongest expression in heart, pancreas, kidney, placenta, lung, and skeletal muscle. Not expressed in liver.

Its subcellular location is the mitochondrion. It carries out the reaction hydrogencarbonate + H(+) = CO2 + H2O. Inhibited by coumarins, sulfonamide derivatives such as acetazolamide (AZA), saccharin and Foscarnet (phosphonoformate trisodium salt). In terms of biological role, mitochondrial carbonic anhydrase that catalyzes the reversible conversion of carbon dioxide to bicarbonate/HCO3. The protein is Carbonic anhydrase 5B, mitochondrial (CA5B) of Homo sapiens (Human).